A 167-amino-acid chain; its full sequence is Lipoprotein signal peptidase (167 aa).

Transmembrane regions (helical) follow at residues 8–28 (FFLL…YWIM), 61–81 (FSHW…LWLW), and 93–113 (FGLT…ICFY). Active-site residues include Asp117 and Asp136. Residues 126 to 146 (IFYFAVFNLADTFITLGVIAI) form a helical membrane-spanning segment.

Belongs to the peptidase A8 family.

The protein localises to the cell inner membrane. It carries out the reaction Release of signal peptides from bacterial membrane prolipoproteins. Hydrolyzes -Xaa-Yaa-Zaa-|-(S,diacylglyceryl)Cys-, in which Xaa is hydrophobic (preferably Leu), and Yaa (Ala or Ser) and Zaa (Gly or Ala) have small, neutral side chains.. It functions in the pathway protein modification; lipoprotein biosynthesis (signal peptide cleavage). In terms of biological role, this protein specifically catalyzes the removal of signal peptides from prolipoproteins. This is Lipoprotein signal peptidase from Bartonella quintana (strain Toulouse) (Rochalimaea quintana).